Here is a 64-residue protein sequence, read N- to C-terminus: U2-aranetoxin-Av1a (64 aa).

In terms of tissue distribution, expressed in fat body, but not in cephalothorax, silk gland, midgut.

Its function is as follows. Insecticidal toxin. This chain is U2-aranetoxin-Av1a, found in Araneus ventricosus (Orbweaver spider).